The sequence spans 87 residues: Small ribosomal subunit protein uS17 (87 aa).

It belongs to the universal ribosomal protein uS17 family. Part of the 30S ribosomal subunit.

Its function is as follows. One of the primary rRNA binding proteins, it binds specifically to the 5'-end of 16S ribosomal RNA. The protein is Small ribosomal subunit protein uS17 of Listeria innocua serovar 6a (strain ATCC BAA-680 / CLIP 11262).